We begin with the raw amino-acid sequence, 485 residues long: E3 ubiquitin-protein ligase TRIM58 (485 aa).

The RING-type zinc-finger motif lies at 15–59 (CSVCLDFLQEPISVDCGHSFCLRCISEFCEKSDSAQGVYACPQCR). The B box-type zinc finger occupies 90–131 (AGSRQCARHGEDLSHFCEEDQTMLCWVCDTSPEHRSHRTETL). Zn(2+)-binding residues include Cys-95, His-98, Cys-117, and His-123. The stretch at 192–241 (LAQEEQLQLRRLEEEERATLQRLRDSRNRLAQQNKALKELAEELEERSQR) forms a coiled coil. Residues 271–466 (DLKTVCRIPG…LPPMTEAAPG (196 aa)) enclose the B30.2/SPRY domain.

Belongs to the TRIM/RBCC family. Expressed in erythroblasts.

The enzyme catalyses S-ubiquitinyl-[E2 ubiquitin-conjugating enzyme]-L-cysteine + [acceptor protein]-L-lysine = [E2 ubiquitin-conjugating enzyme]-L-cysteine + N(6)-ubiquitinyl-[acceptor protein]-L-lysine.. It participates in protein modification; protein ubiquitination. E3 ubiquitin ligase induced during late erythropoiesis. Directly binds and ubiquitinates the intermediate chain of the microtubule motor dynein (DYNC1LI1/DYNC1LI2), stimulating the degradation of the dynein holoprotein complex. May participate in the erythroblast enucleation process through regulation of nuclear polarization. In Mus musculus (Mouse), this protein is E3 ubiquitin-protein ligase TRIM58 (Trim58).